A 143-amino-acid chain; its full sequence is ATP synthase F(0) complex subunit C2, mitochondrial (143 aa).

The transit peptide at 1 to 68 (MYTCAKFVST…RSFQTSAISR (68 aa)) directs the protein to the mitochondrion. A helical transmembrane segment spans residues 84–104 (VGVAGSGAGIGTVFGSLIIGY). K111 carries the N6,N6,N6-trimethyllysine modification. A helical transmembrane segment spans residues 119 to 139 (ILGFALSEAMGLFCLMVAFLI).

This sequence belongs to the ATPase C chain family. As to quaternary structure, F-type ATPases have 2 components, CF(1) - the catalytic core - and CF(0) - the membrane proton channel. CF(1) has five subunits: alpha(3), beta(3), gamma(1), delta(1), epsilon(1). CF(0) has three main subunits: a, b and c. Interacts with DNAJC30; interaction is direct. Post-translationally, trimethylated by ATPSCKMT at Lys-111. Methylation is required for proper incorporation of the C subunit into the ATP synthase complex and mitochondrial respiration.

Its subcellular location is the mitochondrion membrane. Functionally, mitochondrial membrane ATP synthase (F(1)F(0) ATP synthase or Complex V) produces ATP from ADP in the presence of a proton gradient across the membrane which is generated by electron transport complexes of the respiratory chain. F-type ATPases consist of two structural domains, F(1) - containing the extramembraneous catalytic core and F(0) - containing the membrane proton channel, linked together by a central stalk and a peripheral stalk. During catalysis, ATP synthesis in the catalytic domain of F(1) is coupled via a rotary mechanism of the central stalk subunits to proton translocation. Part of the complex F(0) domain. A homomeric c-ring of probably 10 subunits is part of the complex rotary element. The chain is ATP synthase F(0) complex subunit C2, mitochondrial from Bos taurus (Bovine).